A 344-amino-acid polypeptide reads, in one-letter code: Thioredoxin domain-containing protein 15 (344 aa).

The N-terminal stretch at 1–20 is a signal peptide; the sequence is MQLLCWWQVLLWVLGLPAHG. Over 21 to 305 the chain is Extracellular; sequence LEVAEDSGHP…GPLPSTLIKT (285 aa). 2 disordered regions span residues 55-119 and 136-156; these read DHRD…FGLQ and GVTE…SLKS. Residues 88-97 are compositionally biased toward basic and acidic residues; that stretch reads EDQRSPEAHD. The Thioredoxin domain occupies 163–280; it reads ERNVTGLENF…LKIFIFNQTG (118 aa). Residues Asn171, Asn178, Asn190, and Asn277 are each glycosylated (N-linked (GlcNAc...) asparagine). Residues 306–326 form a helical membrane-spanning segment; sequence VDWLLVFSLFFLISFIMYATI. The Cytoplasmic segment spans residues 327–344; sequence RTESIRWLIPGQEQEHAE.

Its subcellular location is the cell projection. The protein resides in the cilium membrane. Functionally, acts as a positive regulator of ciliary hedgehog signaling. Required for cilia biogenesis. The protein is Thioredoxin domain-containing protein 15 (Txndc15) of Mus musculus (Mouse).